The chain runs to 344 residues: Methionine import ATP-binding protein MetN (344 aa).

The ABC transporter domain maps to 7–245 (ISLKKISRCF…PQDDTTIAML (239 aa)). 42-49 (GRSGAGKS) is an ATP binding site.

This sequence belongs to the ABC transporter superfamily. Methionine importer (TC 3.A.1.24) family. In terms of assembly, the complex is composed of two ATP-binding proteins (MetN), two transmembrane proteins (MetI) and a solute-binding protein (MetQ).

It localises to the cell inner membrane. It carries out the reaction L-methionine(out) + ATP + H2O = L-methionine(in) + ADP + phosphate + H(+). The enzyme catalyses D-methionine(out) + ATP + H2O = D-methionine(in) + ADP + phosphate + H(+). In terms of biological role, part of the ABC transporter complex MetNIQ involved in methionine import. Responsible for energy coupling to the transport system. The protein is Methionine import ATP-binding protein MetN of Bartonella henselae (strain ATCC 49882 / DSM 28221 / CCUG 30454 / Houston 1) (Rochalimaea henselae).